Reading from the N-terminus, the 132-residue chain is Probable histone H2A.2 (132 aa).

It belongs to the histone H2A family. As to quaternary structure, the nucleosome is a histone octamer containing two molecules each of H2A, H2B, H3 and H4 assembled in one H3-H4 heterotetramer and two H2A-H2B heterodimers. The octamer wraps approximately 147 bp of DNA. Post-translationally, not ubiquitinated. Expressed mainly in non-dividing tissues of the plant. Also found in meristems and dividing cells.

It is found in the nucleus. The protein localises to the chromosome. Its function is as follows. Core component of nucleosome. Nucleosomes wrap and compact DNA into chromatin, limiting DNA accessibility to the cellular machineries which require DNA as a template. Histones thereby play a central role in transcription regulation, DNA repair, DNA replication and chromosomal stability. DNA accessibility is regulated via a complex set of post-translational modifications of histones, also called histone code, and nucleosome remodeling. This Arabidopsis thaliana (Mouse-ear cress) protein is Probable histone H2A.2.